The sequence spans 410 residues: Peptidase T (410 aa).

Zn(2+) is bound at residue histidine 79. Aspartate 81 is an active-site residue. Aspartate 142 provides a ligand contact to Zn(2+). Glutamate 176 (proton acceptor) is an active-site residue. 3 residues coordinate Zn(2+): glutamate 177, aspartate 199, and histidine 381.

This sequence belongs to the peptidase M20B family. Zn(2+) serves as cofactor.

The protein localises to the cytoplasm. It catalyses the reaction Release of the N-terminal residue from a tripeptide.. Functionally, cleaves the N-terminal amino acid of tripeptides. This chain is Peptidase T, found in Bacillus licheniformis (strain ATCC 14580 / DSM 13 / JCM 2505 / CCUG 7422 / NBRC 12200 / NCIMB 9375 / NCTC 10341 / NRRL NRS-1264 / Gibson 46).